A 353-amino-acid polypeptide reads, in one-letter code: Histidinol-phosphate aminotransferase (353 aa).

At Lys218 the chain carries N6-(pyridoxal phosphate)lysine.

This sequence belongs to the class-II pyridoxal-phosphate-dependent aminotransferase family. Histidinol-phosphate aminotransferase subfamily. Homodimer. The cofactor is pyridoxal 5'-phosphate.

It catalyses the reaction L-histidinol phosphate + 2-oxoglutarate = 3-(imidazol-4-yl)-2-oxopropyl phosphate + L-glutamate. It functions in the pathway amino-acid biosynthesis; L-histidine biosynthesis; L-histidine from 5-phospho-alpha-D-ribose 1-diphosphate: step 7/9. The polypeptide is Histidinol-phosphate aminotransferase (Synechococcus sp. (strain JA-2-3B'a(2-13)) (Cyanobacteria bacterium Yellowstone B-Prime)).